Reading from the N-terminus, the 393-residue chain is S-adenosylmethionine synthase (393 aa).

Residue His-16 coordinates ATP. Asp-18 is a binding site for Mg(2+). Glu-44 is a binding site for K(+). L-methionine-binding residues include Glu-57 and Gln-100. A flexible loop region spans residues 100 to 110 (QSNDIAQGVDH). Residues 167–169 (DAK), 238–239 (RF), Asp-247, 253–254 (RK), Ala-270, and Lys-274 contribute to the ATP site. Asp-247 contributes to the L-methionine binding site. Lys-278 is an L-methionine binding site.

Belongs to the AdoMet synthase family. As to quaternary structure, homotetramer; dimer of dimers. It depends on Mg(2+) as a cofactor. Requires K(+) as cofactor.

The protein resides in the cytoplasm. The enzyme catalyses L-methionine + ATP + H2O = S-adenosyl-L-methionine + phosphate + diphosphate. The protein operates within amino-acid biosynthesis; S-adenosyl-L-methionine biosynthesis; S-adenosyl-L-methionine from L-methionine: step 1/1. In terms of biological role, catalyzes the formation of S-adenosylmethionine (AdoMet) from methionine and ATP. The overall synthetic reaction is composed of two sequential steps, AdoMet formation and the subsequent tripolyphosphate hydrolysis which occurs prior to release of AdoMet from the enzyme. The protein is S-adenosylmethionine synthase of Acidovorax sp. (strain JS42).